A 407-amino-acid polypeptide reads, in one-letter code: Imidazolonepropionase (407 aa).

Positions 68 and 70 each coordinate Fe(3+). Zn(2+) contacts are provided by His-68 and His-70. 4-imidazolone-5-propanoate is bound by residues Arg-77, Tyr-140, and His-173. N-formimidoyl-L-glutamate is bound at residue Tyr-140. Fe(3+) is bound at residue His-236. Position 236 (His-236) interacts with Zn(2+). Gln-239 contributes to the 4-imidazolone-5-propanoate binding site. Asp-311 serves as a coordination point for Fe(3+). Asp-311 is a Zn(2+) binding site. Residues Asn-313 and Gly-315 each contribute to the N-formimidoyl-L-glutamate site. Residue Thr-316 coordinates 4-imidazolone-5-propanoate.

It belongs to the metallo-dependent hydrolases superfamily. HutI family. Requires Zn(2+) as cofactor. Fe(3+) serves as cofactor.

It localises to the cytoplasm. It carries out the reaction 4-imidazolone-5-propanoate + H2O = N-formimidoyl-L-glutamate. It functions in the pathway amino-acid degradation; L-histidine degradation into L-glutamate; N-formimidoyl-L-glutamate from L-histidine: step 3/3. In terms of biological role, catalyzes the hydrolytic cleavage of the carbon-nitrogen bond in imidazolone-5-propanoate to yield N-formimidoyl-L-glutamate. It is the third step in the universal histidine degradation pathway. This Stenotrophomonas maltophilia (strain R551-3) protein is Imidazolonepropionase.